Here is a 703-residue protein sequence, read N- to C-terminus: Phenylalanine aminomutase (L-beta-phenylalanine forming) (703 aa).

Tyrosine 79 acts as the Proton donor/acceptor in catalysis. A cross-link (5-imidazolinone (Ala-Gly)) is located at residues 177–179; the sequence is ASG. Position 178 is a 2,3-didehydroalanine (Ser) (serine 178).

This sequence belongs to the PAL/histidase family. Contains an active site 4-methylidene-imidazol-5-one (MIO), which is formed autocatalytically by cyclization and dehydration of residues Ala-Ser-Gly.

It carries out the reaction L-phenylalanine = L-beta-phenylalanine. It functions in the pathway mycotoxin biosynthesis. Functionally, phenylalanine aminomutase; part of the gene cluster that mediates the biosynthesis of the mycotoxin cyclochlorotine, a hepatotoxic and carcinogenic cyclic chlorinated pentapeptide. Within the pathway, cctP1 provides the uncommon building block beta-Phe from Phe. The NRPS cctN initially catalyzes the condensation of L-serine (Ser), Pro, L-2-aminobutyrate (2Abu), Ser, and beta-Phe in this order to produce isocyclotine. After the dichlorination of Pro2 catalyzed by cctP2 to produce isocyclochlorotine, the cctO-mediated transacylation of isocyclochlorotine can furnish cyclochlorotine. The subsequent hydroxylation of cyclochlorotine by cctR yields hydroxycyclochlorotine as the final product. CctP1 probably acts as a phenylalanine aminomutase and provides the uncommon building block beta-Phe. Furthermore, 2Abu can be synthesized from threonine by one of the threonine dehydratases and transaminases localized outside of the cluster. The functions of the remaining proteins encoded by the cluster, cctM and cctT, have not been identified yet. The polypeptide is Phenylalanine aminomutase (L-beta-phenylalanine forming) (Talaromyces islandicus (Penicillium islandicum)).